The sequence spans 286 residues: Probable sulfate transport system permease protein cysT (286 aa).

7 helical membrane passes run 27-47, 77-97, 106-126, 147-167, 196-216, 225-245, and 257-277; these read PWQL…IALL, TALF…WVLV, IIDA…GLTL, VAFT…PFVV, FWRV…ALAF, SVVI…VLIF, and TIIG…INFI. One can recognise an ABC transmembrane type-1 domain in the interval 71-272; the sequence is YVVTLMTALF…ILSISLFLLF (202 aa).

The protein belongs to the binding-protein-dependent transport system permease family. CysTW subfamily.

It localises to the plastid. The protein resides in the chloroplast membrane. Part of the ABC transporter complex cysAWTP (TC 3.A.1.6.1) involved in sulfate/thiosulfate import. Probably responsible for the translocation of the substrate across the membrane. The protein is Probable sulfate transport system permease protein cysT (cysT) of Chlorokybus atmophyticus (Soil alga).